Reading from the N-terminus, the 521-residue chain is Exodeoxyribonuclease 7 large subunit (521 aa).

The tract at residues 494–521 is disordered; that stretch reads ATSGAARPKPAAKPSTKAKEPGNQGSLF. The span at 498 to 508 shows a compositional bias: low complexity; it reads AARPKPAAKPS.

This sequence belongs to the XseA family. Heterooligomer composed of large and small subunits.

The protein localises to the cytoplasm. The enzyme catalyses Exonucleolytic cleavage in either 5'- to 3'- or 3'- to 5'-direction to yield nucleoside 5'-phosphates.. Functionally, bidirectionally degrades single-stranded DNA into large acid-insoluble oligonucleotides, which are then degraded further into small acid-soluble oligonucleotides. This chain is Exodeoxyribonuclease 7 large subunit, found in Mesorhizobium japonicum (strain LMG 29417 / CECT 9101 / MAFF 303099) (Mesorhizobium loti (strain MAFF 303099)).